Reading from the N-terminus, the 722-residue chain is Polyribonucleotide nucleotidyltransferase (722 aa).

2 residues coordinate Mg(2+): Asp487 and Asp493. The 60-residue stretch at 554–613 folds into the KH domain; that stretch reads PRMVSFKIHPDKIREVIGKGGATIQALTKETGCSIDIKDDGTVTIASTSAEGMAEAKARI. Positions 623 to 691 constitute an S1 motif domain; the sequence is GKIYEGPVVK…ERGRLRLSLK (69 aa).

Belongs to the polyribonucleotide nucleotidyltransferase family. Mg(2+) is required as a cofactor.

The protein resides in the cytoplasm. The enzyme catalyses RNA(n+1) + phosphate = RNA(n) + a ribonucleoside 5'-diphosphate. Its function is as follows. Involved in mRNA degradation. Catalyzes the phosphorolysis of single-stranded polyribonucleotides processively in the 3'- to 5'-direction. The protein is Polyribonucleotide nucleotidyltransferase of Polynucleobacter necessarius subsp. necessarius (strain STIR1).